The following is a 330-amino-acid chain: Aspartate--ammonia ligase (330 aa).

Belongs to the class-II aminoacyl-tRNA synthetase family. AsnA subfamily.

The protein localises to the cytoplasm. The enzyme catalyses L-aspartate + NH4(+) + ATP = L-asparagine + AMP + diphosphate + H(+). It participates in amino-acid biosynthesis; L-asparagine biosynthesis; L-asparagine from L-aspartate (ammonia route): step 1/1. The protein is Aspartate--ammonia ligase of Mannheimia succiniciproducens (strain KCTC 0769BP / MBEL55E).